Consider the following 525-residue polypeptide: Polyamine aminopropyltransferase 1 (525 aa).

The next 6 membrane-spanning stretches (helical) occupy residues 21–41 (ALLV…ELIA), 53–73 (ILQF…GSWV), 89–109 (LELL…LLFA), 117–137 (LVLY…IPLV), 155–175 (VLTF…LVLA), and 180–200 (LVRT…WTLW). The 245-residue stretch at 220 to 464 (AGMVGAALLA…GEWGFILAAP (245 aa)) folds into the PABS domain. Positions 222 to 471 (MVGAALLAGF…AAPGRADFRP (250 aa)) are spermidine synthase. Gln-259 contacts S-methyl-5'-thioadenosine. Residues His-289 and Asp-313 each coordinate spermidine. S-methyl-5'-thioadenosine-binding positions include Asp-333 and 367–368 (DA). Asp-385 functions as the Proton acceptor in the catalytic mechanism.

This sequence belongs to the spermidine/spermine synthase family. Homodimer or homotetramer.

It is found in the cell membrane. It carries out the reaction S-adenosyl 3-(methylsulfanyl)propylamine + putrescine = S-methyl-5'-thioadenosine + spermidine + H(+). It participates in amine and polyamine biosynthesis; spermidine biosynthesis; spermidine from putrescine: step 1/1. Catalyzes the irreversible transfer of a propylamine group from the amino donor S-adenosylmethioninamine (decarboxy-AdoMet) to putrescine (1,4-diaminobutane) to yield spermidine. The sequence is that of Polyamine aminopropyltransferase 1 from Ralstonia nicotianae (strain ATCC BAA-1114 / GMI1000) (Ralstonia solanacearum).